A 146-amino-acid chain; its full sequence is Hemoglobin subunit beta-2 (146 aa).

Residues His2–His146 form the Globin domain. 2 residues coordinate heme b: His63 and His92.

The protein belongs to the globin family. There are three forms of hemoglobin in Sphenodon: A, A' and D. Hb A is a tetramer of two alpha-A and two beta-1, Hb A' is a tetramer of two alpha-a and two beta-2, Hb D is a tetramer of two alpha-D and two beta-2.

Functionally, involved in oxygen transport from the lung to the various peripheral tissues. This Sphenodon punctatus (Tuatara) protein is Hemoglobin subunit beta-2 (HBB2).